The sequence spans 1210 residues: Epidermal growth factor receptor (1210 aa).

The N-terminal stretch at 1–24 (MRPSGTAGAALLALLAALCPASRA) is a signal peptide. The Extracellular portion of the chain corresponds to 25–645 (LEEKKVCQGT…CARNGPKIPS (621 aa)). A disulfide bridge connects residues Cys-31 and Cys-58. Residues 75–300 (DLSFLKTIQE…CVKKCPRNYV (226 aa)) form an Approximate repeat. N-linked (GlcNAc...) asparagine glycosylation is found at Asn-128, Asn-175, and Asn-196. Intrachain disulfides connect Cys-157-Cys-187, Cys-190-Cys-199, Cys-194-Cys-207, Cys-215-Cys-223, Cys-219-Cys-231, Cys-232-Cys-240, Cys-236-Cys-248, Cys-251-Cys-260, Cys-264-Cys-291, Cys-295-Cys-307, Cys-311-Cys-326, Cys-329-Cys-333, and Cys-337-Cys-362. Phosphoserine is present on Ser-229. 4 N-linked (GlcNAc...) asparagine glycosylation sites follow: Asn-352, Asn-361, Asn-413, and Asn-444. The Approximate repeat unit spans residues 390-600 (QELDILKTVK…CVKTCPAGVM (211 aa)). 11 disulfide bridges follow: Cys-470-Cys-499, Cys-506-Cys-515, Cys-510-Cys-523, Cys-526-Cys-535, Cys-539-Cys-555, Cys-558-Cys-571, Cys-562-Cys-579, Cys-582-Cys-591, Cys-595-Cys-617, Cys-620-Cys-628, and Cys-624-Cys-636. An N-linked (GlcNAc...) asparagine glycan is attached at Asn-528. Residue Asn-568 is glycosylated (N-linked (GlcNAc...) asparagine). Asn-603 carries N-linked (GlcNAc...) asparagine glycosylation. The chain crosses the membrane as a helical span at residues 646-668 (IATGMVGALLLLLVVALGIGLFM). The Cytoplasmic segment spans residues 669–1210 (RRRHIVRKRT…APQSSEFIGA (542 aa)). Thr-678 carries the phosphothreonine; by PKC and PKD/PRKD1 modification. The segment at 688 to 704 (LVEPLTPSGEAPNQALL) is important for dimerization, phosphorylation and activation. Thr-693 is subject to Phosphothreonine; by PKD/PRKD1. Position 695 is a phosphoserine (Ser-695). The Protein kinase domain maps to 712 to 979 (FKKIKVLGSG…KMARDPQRYL (268 aa)). Residue Lys-716 forms a Glycyl lysine isopeptide (Lys-Gly) (interchain with G-Cter in ubiquitin) linkage. 718-726 (LGSGAFGTV) lines the ATP pocket. A Glycyl lysine isopeptide (Lys-Gly) (interchain with G-Cter in ubiquitin) cross-link involves residue Lys-737. Position 745 (Lys-745) interacts with ATP. Lys-745 carries the post-translational modification N6-(2-hydroxyisobutyryl)lysine. Glycyl lysine isopeptide (Lys-Gly) (interchain with G-Cter in ubiquitin) cross-links involve residues Lys-754 and Lys-757. 790–791 (TQ) is a binding site for ATP. Asp-837 functions as the Proton acceptor in the catalytic mechanism. Asp-855 contributes to the ATP binding site. Lys-867 participates in a covalent cross-link: Glycyl lysine isopeptide (Lys-Gly) (interchain with G-Cter in ubiquitin). Tyr-869 is modified (phosphotyrosine). Glycyl lysine isopeptide (Lys-Gly) (interchain with G-Cter in ubiquitin) cross-links involve residues Lys-929, Lys-960, and Lys-970. Ser-991 and Ser-995 each carry phosphoserine. Phosphotyrosine; by autocatalysis occurs at positions 998 and 1016. Residues Ser-1026 and Ser-1039 each carry the phosphoserine modification. The residue at position 1041 (Thr-1041) is a Phosphothreonine. At Ser-1042 the chain carries Phosphoserine. Cys-1049 carries S-palmitoyl cysteine lipidation. Phosphoserine is present on Ser-1064. Tyr-1069 is modified (phosphotyrosine). Phosphoserine occurs at positions 1070, 1071, and 1081. 2 positions are modified to phosphotyrosine; by autocatalysis: Tyr-1092 and Tyr-1110. A disordered region spans residues 1097–1137 (VPKRPAGSVQNPVYHNQPLNPAPSRDPHYQDPHSTAVGNPE). 2 stretches are compositionally biased toward polar residues: residues 1104 to 1115 (SVQNPVYHNQPL) and 1128 to 1137 (PHSTAVGNPE). The S-palmitoyl cysteine moiety is linked to residue Cys-1146. Phosphoserine is present on Ser-1166. Residues Tyr-1172 and Tyr-1197 each carry the phosphotyrosine; by autocatalysis modification. Arg-1199 carries the post-translational modification Omega-N-methylarginine.

It belongs to the protein kinase superfamily. Tyr protein kinase family. EGF receptor subfamily. In terms of assembly, binding of the ligand triggers homo- and/or heterodimerization of the receptor triggering its autophosphorylation. Heterodimer with ERBB2. Forms a complex with CCDC88A/GIV (via SH2-like regions) and GNAI3 which leads to enhanced EGFR signaling and triggering of cell migration; binding to CCDC88A requires autophosphorylation of the EGFR C-terminal region, and ligand stimulation is required for recruitment of GNAI3 to the complex. Interacts with ERRFI1; inhibits dimerization of the kinase domain and autophosphorylation. Part of a complex with ERBB2 and either PIK3C2A or PIK3C2B. Interacts with GRB2; an adapter protein coupling the receptor to downstream signaling pathways. Interacts with GAB2; involved in signaling downstream of EGFR. Interacts with STAT3; mediates EGFR downstream signaling in cell proliferation. Interacts with RIPK1; involved in NF-kappa-B activation. Interacts (autophosphorylated) with CBL, CBLB and CBLC; involved in EGFR ubiquitination and regulation; interaction with CBL is reduced in the presence of tensin TNS4. Interacts with SOCS5; regulates EGFR degradation through ELOC- and ELOB-mediated ubiquitination and proteasomal degradation. Interacts with PRMT5; methylates EGFR and enhances interaction with PTPN6. Interacts (phosphorylated) with PTPN6; inhibits EGFR-dependent activation of MAPK/ERK. Interacts with COPG1; essential for regulation of EGF-dependent nuclear transport of EGFR by retrograde trafficking from the Golgi to the ER. Interacts with TNK2; this interaction is dependent on EGF stimulation and kinase activity of EGFR. Interacts with PCNA; positively regulates PCNA. Interacts with PELP1. Interacts with MUC1. Interacts with AP2M1. Interacts with FER. May interact with EPS8; mediates EPS8 phosphorylation. Interacts (via SH2 domains) with GRB2, NCK1 and NCK2. Interacts with ATXN2. Interacts with GAREM1. Interacts (ubiquitinated) with ANKRD13A/B/D; the interaction is direct and may regulate EGFR internalization after EGF stimulation. Interacts with GPER1; the interaction occurs in an estrogen-dependent manner. Interacts (via C-terminal cytoplasmic kinase domain) with ZPR1 (via zinc fingers). Interacts with RNF115 and RNF126. Interacts with GPRC5A (via its transmembrane domain). Interacts with FAM83B; positively regulates EGFR inducing its autophosphorylation in absence of stimulation by EGF. Interacts with LAPTM4B; positively correlates with EGFR activation. Interacts with STX19. Interacts with CD44. Interacts with PGRMC1; the interaction requires PGRMC1 homodimerization. Interacts with PIKFYVE. Interacts with NEU3. Interacts with TRAF4. Interacts with the ant venom OMEGA-myrmeciitoxin(02)-Mg1a. Interacts with CD82; this interaction facilitates ligand-induced endocytosis of the receptor and its subsequent desensitization. In terms of processing, phosphorylated on Tyr residues in response to EGF. Phosphorylation at Ser-695 is partial and occurs only if Thr-693 is phosphorylated. Phosphorylation at Thr-678 and Thr-693 by PRKD1 inhibits EGF-induced MAPK8/JNK1 activation. Dephosphorylation by PTPRJ prevents endocytosis and stabilizes the receptor at the plasma membrane. Autophosphorylation at Tyr-1197 is stimulated by methylation at Arg-1199 and enhances interaction with PTPN6. Autophosphorylation at Tyr-1092 and/or Tyr-1110 recruits STAT3. Dephosphorylated by PTPN1 and PTPN2. Post-translationally, monoubiquitinated and polyubiquitinated upon EGF stimulation; which does not affect tyrosine kinase activity or signaling capacity but may play a role in lysosomal targeting. Polyubiquitin linkage is mainly through 'Lys-63', but linkage through 'Lys-48', 'Lys-11' and 'Lys-29' also occurs. Deubiquitination by OTUD7B prevents degradation. Ubiquitinated by RNF115 and RNF126. Ubiquitinated by ZNRF1 or CBL at different lysines in response to EGF stimulation; leading to recruitment of the ESCRT machinery and subsequent degradation in the lysosomes. Deubiquitinated by UCHL1 leading to the inhibition of its degradation. Palmitoylated on Cys residues by ZDHHC20. Palmitoylation inhibits internalization after ligand binding, and increases the persistence of tyrosine-phosphorylated EGFR at the cell membrane. Palmitoylation increases the amplitude and duration of EGFR signaling. In terms of processing, methylated. Methylation at Arg-1199 by PRMT5 stimulates phosphorylation at Tyr-1197. As to expression, hypothalamus.

It is found in the cell membrane. The protein localises to the endoplasmic reticulum membrane. It localises to the golgi apparatus membrane. Its subcellular location is the nucleus membrane. The protein resides in the endosome. It is found in the endosome membrane. The protein localises to the nucleus. The enzyme catalyses L-tyrosyl-[protein] + ATP = O-phospho-L-tyrosyl-[protein] + ADP + H(+). Endocytosis and inhibition of the activated EGFR by phosphatases like PTPRJ and PTPRK constitute immediate regulatory mechanisms. Upon EGF-binding phosphorylates EPS15 that regulates EGFR endocytosis and activity. Moreover, inducible feedback inhibitors including LRIG1, SOCS4, SOCS5 and ERRFI1 constitute alternative regulatory mechanisms for the EGFR signaling. Functionally, receptor tyrosine kinase binding ligands of the EGF family and activating several signaling cascades to convert extracellular cues into appropriate cellular responses. Known ligands include EGF, TGFA/TGF-alpha, AREG, epigen/EPGN, BTC/betacellulin, epiregulin/EREG and HBEGF/heparin-binding EGF. Ligand binding triggers receptor homo- and/or heterodimerization and autophosphorylation on key cytoplasmic residues. The phosphorylated receptor recruits adapter proteins like GRB2 which in turn activates complex downstream signaling cascades. Activates at least 4 major downstream signaling cascades including the RAS-RAF-MEK-ERK, PI3 kinase-AKT, PLCgamma-PKC and STATs modules. May also activate the NF-kappa-B signaling cascade. Also directly phosphorylates other proteins like RGS16, activating its GTPase activity and probably coupling the EGF receptor signaling to the G protein-coupled receptor signaling. Also phosphorylates MUC1 and increases its interaction with SRC and CTNNB1/beta-catenin. Positively regulates cell migration via interaction with CCDC88A/GIV which retains EGFR at the cell membrane following ligand stimulation, promoting EGFR signaling which triggers cell migration. Plays a role in enhancing learning and memory performance. Plays a role in mammalian pain signaling (long-lasting hypersensitivity). The polypeptide is Epidermal growth factor receptor (EGFR) (Macaca mulatta (Rhesus macaque)).